The sequence spans 419 residues: Putative zinc metalloprotease SPy_1963/M5005_Spy1674 (419 aa).

Zn(2+) is bound at residue His-18. Glu-19 is an active-site residue. Position 22 (His-22) interacts with Zn(2+). The next 4 membrane-spanning stretches (helical) occupy residues 169-191 (LITN…ILLV), 301-323 (LAWS…FSLN), 343-365 (LESV…LIPI), and 392-411 (AYIT…AVTW). Residues 175-274 (GPMNNFILGI…LKTVAVKPQK (100 aa)) enclose the PDZ domain.

The protein belongs to the peptidase M50B family. The cofactor is Zn(2+).

It localises to the cell membrane. In Streptococcus pyogenes serotype M1, this protein is Putative zinc metalloprotease SPy_1963/M5005_Spy1674.